The sequence spans 116 residues: Vesicle-associated membrane protein 5 (116 aa).

Residues 1–72 (MAGKELERCQ…RWENARCRIY (72 aa)) are Cytoplasmic-facing. In terms of domain architecture, v-SNARE coiled-coil homology spans 5–65 (ELERCQRQAD…KTLAQKKRWE (61 aa)). 3 positions are modified to phosphoserine: serine 41, serine 48, and serine 49. Residues 73 to 93 (MGLAVGIALLILLIVLLVIFL) traverse the membrane as a helical; Anchor for type IV membrane protein segment. Residues 94–116 (PQSSKGSSAPQVQDAGPASGPGE) are Vesicular-facing. Positions 97 to 116 (SKGSSAPQVQDAGPASGPGE) are disordered.

It belongs to the synaptobrevin family.

Its subcellular location is the cell membrane. The protein localises to the endomembrane system. It is found in the golgi apparatus. It localises to the trans-Golgi network membrane. Its function is as follows. May participate in trafficking events that are associated with myogenesis, such as myoblast fusion and/or GLUT4 trafficking. The protein is Vesicle-associated membrane protein 5 (VAMP5) of Bos taurus (Bovine).